Reading from the N-terminus, the 200-residue chain is Gamma-glutamyl-CDP-amidate hydrolase (200 aa).

A Glutamine amidotransferase type-1 domain is found at 20–200; it reads ECLALDWGKL…LKEWFSLIKE (181 aa). The Nucleophile role is filled by Cys101. Active-site residues include His178 and Glu180.

It catalyses the reaction N(5)-(cytidine 5'-diphosphoramidyl)-L-glutamine + H2O = cytidine 5'-diphosphoramidate + L-glutamate + H(+). The protein operates within capsule biogenesis; capsule polysaccharide biosynthesis. Involved in the biosynthesis of the O-methyl phosphoramidate (MeOPN) group found on the capsular polysaccharide (CPS) of C.jejuni. Catalyzes the hydrolysis of CDP-L-glutamine to L-glutamate and cytidine diphosphoramidate. The polypeptide is Gamma-glutamyl-CDP-amidate hydrolase (Campylobacter jejuni subsp. jejuni serotype O:2 (strain ATCC 700819 / NCTC 11168)).